Reading from the N-terminus, the 445-residue chain is 3-phosphoshikimate 1-carboxyvinyltransferase (445 aa).

Residues M1–V24 are disordered. A compositionally biased stretch (polar residues) spans L7–I22. 3-phosphoshikimate is bound by residues K28, S29, and R33. Residue K28 coordinates phosphoenolpyruvate. Positions 101 and 129 each coordinate phosphoenolpyruvate. Positions 174, 176, 326, and 353 each coordinate 3-phosphoshikimate. Q176 contacts phosphoenolpyruvate. D326 functions as the Proton acceptor in the catalytic mechanism. Positions 357 and 399 each coordinate phosphoenolpyruvate.

This sequence belongs to the EPSP synthase family. Monomer.

It is found in the cytoplasm. It carries out the reaction 3-phosphoshikimate + phosphoenolpyruvate = 5-O-(1-carboxyvinyl)-3-phosphoshikimate + phosphate. The protein operates within metabolic intermediate biosynthesis; chorismate biosynthesis; chorismate from D-erythrose 4-phosphate and phosphoenolpyruvate: step 6/7. Its function is as follows. Catalyzes the transfer of the enolpyruvyl moiety of phosphoenolpyruvate (PEP) to the 5-hydroxyl of shikimate-3-phosphate (S3P) to produce enolpyruvyl shikimate-3-phosphate and inorganic phosphate. The sequence is that of 3-phosphoshikimate 1-carboxyvinyltransferase from Acidiphilium cryptum (strain JF-5).